The sequence spans 103 residues: Large ribosomal subunit protein uL24 (103 aa).

This sequence belongs to the universal ribosomal protein uL24 family. As to quaternary structure, part of the 50S ribosomal subunit.

Functionally, one of two assembly initiator proteins, it binds directly to the 5'-end of the 23S rRNA, where it nucleates assembly of the 50S subunit. One of the proteins that surrounds the polypeptide exit tunnel on the outside of the subunit. The sequence is that of Large ribosomal subunit protein uL24 from Syntrophomonas wolfei subsp. wolfei (strain DSM 2245B / Goettingen).